We begin with the raw amino-acid sequence, 338 residues long: Fructose-1,6-bisphosphatase class 1 1 (338 aa).

The Mg(2+) site is built by E94, D116, L118, and D119. Substrate contacts are provided by residues 119–122 (DGSS), N210, and K276. E282 contacts Mg(2+).

The protein belongs to the FBPase class 1 family. Homotetramer. Mg(2+) serves as cofactor.

The protein resides in the cytoplasm. It carries out the reaction beta-D-fructose 1,6-bisphosphate + H2O = beta-D-fructose 6-phosphate + phosphate. Its pathway is carbohydrate biosynthesis; gluconeogenesis. The polypeptide is Fructose-1,6-bisphosphatase class 1 1 (Paraburkholderia xenovorans (strain LB400)).